Consider the following 77-residue polypeptide: UPF0291 protein BLi02035/BL02933 (77 aa).

The segment at 57–77 (PEGNDVTPEKLKQEKRNRRLH) is disordered.

This sequence belongs to the UPF0291 family.

The protein resides in the cytoplasm. The polypeptide is UPF0291 protein BLi02035/BL02933 (Bacillus licheniformis (strain ATCC 14580 / DSM 13 / JCM 2505 / CCUG 7422 / NBRC 12200 / NCIMB 9375 / NCTC 10341 / NRRL NRS-1264 / Gibson 46)).